Reading from the N-terminus, the 1598-residue chain is Mushroom body large-type Kenyon cell-specific protein 1 (1598 aa).

Disordered stretches follow at residues 83–105 (PGNL…SLPA), 140–387 (RHHH…SDGI), 436–462 (PHDD…PMSV), and 495–525 (PLVG…SQDN). Over residues 140–151 (RHHHLQNHHHHL) the composition is skewed to basic residues. Residues 164–174 (QQQQQQQQRQQ) are compositionally biased toward low complexity. The span at 175–191 (QRQEERRLRPDEIKVEV) shows a compositional bias: basic and acidic residues. A compositionally biased stretch (low complexity) spans 210–263 (STDASTPATVTTTGATTTLPAASATGTGPATPSAVVATSNATAAMTTGTTTIPT). Positions 275-291 (EGADDRDDDEENEEEED) are enriched in acidic residues. Composition is skewed to basic and acidic residues over residues 292–305 (GRGQ…LKLD), 315–324 (LRREKDRGSR), and 335–346 (DGTKERTEEVAL). A Phosphoserine; by MAPK modification is found at Ser-444. The span at 445-461 (PQSDSSSSSRSAESPMS) shows a compositional bias: low complexity. In terms of domain architecture, HTH psq-type 1 spans 582 to 634 (VGAGGGRRAYTEEELQAALRDIQSGKLGTRRAAVIYGIPRSTLRNKVYKLAME). A DNA-binding region (H-T-H motif) is located at residues 610–630 (TRRAAVIYGIPRSTLRNKVYK). Disordered stretches follow at residues 636–705 (ERDA…SGAE), 797–877 (RLSK…DSAQ), 962–1045 (GQTV…NYDR), 1082–1145 (ERHL…NGIK), 1248–1283 (ETSA…NGSF), and 1301–1598 (RAMT…SVEQ). Residues 653 to 687 (APATTITTITTTTTTTTTTTTTTTTPNTTQNASAT) are compositionally biased toward low complexity. Positions 694–705 (DEVDDKELSGAE) are enriched in acidic residues. The span at 820-855 (THPQAQAQAQPQQQQQQQQQQPQQQQQQQQQQQQQQ) shows a compositional bias: low complexity. Gly residues predominate over residues 965-975 (VSGGGMGGCQP). The span at 1003-1021 (ANAQQGQAQAQAKPQSQEA) shows a compositional bias: low complexity. The region spanning 1034 to 1086 (RPKRGKYRNYDRDSLVEAVRAVQRGEMSVHRAGSYYGVPHSTLEYKVKERHLM) is the HTH psq-type 2 domain. A DNA-binding region (H-T-H motif) is located at residues 1062–1082 (VHRAGSYYGVPHSTLEYKVKE). Over residues 1093–1102 (QKQSDDKTKE) the composition is skewed to basic and acidic residues. Residues 1103–1120 (TSTVTAAAAATNIRPGTA) show a composition bias toward low complexity. Low complexity predominate over residues 1309 to 1318 (QQQQASSQQQ). Basic and acidic residues-rich tracts occupy residues 1383 to 1392 (DRGRNDDGSD) and 1407 to 1442 (GSRD…DRKT). The segment covering 1447–1466 (PQQPQQQQQQQQQQQQQQQQ) has biased composition (low complexity). The span at 1481–1497 (TDKKSACDSKLIVDHSS) shows a compositional bias: basic and acidic residues. Low complexity predominate over residues 1501–1547 (QQQQPQQQQQQQQQQQPQQQSQQPQQQQPQPQQQQQQQQQQQPQQQQ). A compositionally biased stretch (polar residues) spans 1562–1577 (RGYNSGNNRSGEQANS).

In terms of assembly, homodimer. In terms of tissue distribution, large-type Kenyon cells of mushroom body.

Its subcellular location is the nucleus. In terms of biological role, transcriptional activator which binds to the consensus sequence 5'-CCCTATCGATCGATCTCTACCT-3'. May play a role in higher-order sensory processing. The chain is Mushroom body large-type Kenyon cell-specific protein 1 (Mblk-1) from Apis mellifera (Honeybee).